Consider the following 1284-residue polypeptide: A-type inclusion protein A25 homolog (1284 aa).

The segment at 340–383 (KPITNTGIEEPHATGGDKEEQEQQPVKVVQSKPDDGITPYNPFE) is disordered. Residues 348–357 (EEPHATGGDK) are compositionally biased toward basic and acidic residues. 10 repeat units span residues 611–637 (VRRE…RNQE), 638–665 (DTQE…SGGG), 666–689 (NLTE…ECRG), 690–720 (NATE…NNAD), 721–751 (TERE…SNAD), 752–780 (MERE…GNGT), 781–811 (SSEE…ELYS), 812–842 (AYKS…KTDS), 843–871 (YYRR…TNHA), and 872–912 (KYID…REIE). The tract at residues 611–912 (VRRELEEERR…DMDQYKREIE (302 aa)) is 10 X approximate tandem repeats. Positions 1169-1234 (PLTTEDTEPK…PPKPETPQIS (66 aa)) are disordered. Residues 1180–1192 (VEVVPPSSDVTEP) show a composition bias toward low complexity. Polar residues predominate over residues 1211 to 1221 (SEYQTSVSQVA).

It belongs to the poxviridae A25 protein family. As to quaternary structure, interacts (via N-terminus) with protein A26.

It localises to the virion. Its function is as follows. Structural protein that forms a matrix surrounding the mature virion (MV) through interaction with protein A26. Presence of protein A25 in the virion structurally prevents direct virus-cell fusion mechanism. This chain is A-type inclusion protein A25 homolog (ATI), found in Apodemus sylvaticus (European woodmouse).